The sequence spans 409 residues: NADH-quinone oxidoreductase subunit D (409 aa).

Belongs to the complex I 49 kDa subunit family. In terms of assembly, NDH-1 is composed of 14 different subunits. Subunits NuoB, C, D, E, F, and G constitute the peripheral sector of the complex.

It is found in the cell inner membrane. It catalyses the reaction a quinone + NADH + 5 H(+)(in) = a quinol + NAD(+) + 4 H(+)(out). In terms of biological role, NDH-1 shuttles electrons from NADH, via FMN and iron-sulfur (Fe-S) centers, to quinones in the respiratory chain. The immediate electron acceptor for the enzyme in this species is believed to be ubiquinone. Couples the redox reaction to proton translocation (for every two electrons transferred, four hydrogen ions are translocated across the cytoplasmic membrane), and thus conserves the redox energy in a proton gradient. The chain is NADH-quinone oxidoreductase subunit D from Helicobacter pylori (strain G27).